Reading from the N-terminus, the 279-residue chain is Putative pyruvate, phosphate dikinase regulatory protein (279 aa).

153–160 is an ADP binding site; that stretch reads GVSRTSKT.

It belongs to the pyruvate, phosphate/water dikinase regulatory protein family. PDRP subfamily.

The enzyme catalyses N(tele)-phospho-L-histidyl/L-threonyl-[pyruvate, phosphate dikinase] + ADP = N(tele)-phospho-L-histidyl/O-phospho-L-threonyl-[pyruvate, phosphate dikinase] + AMP + H(+). The catalysed reaction is N(tele)-phospho-L-histidyl/O-phospho-L-threonyl-[pyruvate, phosphate dikinase] + phosphate + H(+) = N(tele)-phospho-L-histidyl/L-threonyl-[pyruvate, phosphate dikinase] + diphosphate. In terms of biological role, bifunctional serine/threonine kinase and phosphorylase involved in the regulation of the pyruvate, phosphate dikinase (PPDK) by catalyzing its phosphorylation/dephosphorylation. This chain is Putative pyruvate, phosphate dikinase regulatory protein, found in Rhodopseudomonas palustris (strain BisA53).